A 118-amino-acid chain; its full sequence is Large ribosomal subunit protein bL20 (118 aa).

The protein belongs to the bacterial ribosomal protein bL20 family.

Its function is as follows. Binds directly to 23S ribosomal RNA and is necessary for the in vitro assembly process of the 50S ribosomal subunit. It is not involved in the protein synthesizing functions of that subunit. This chain is Large ribosomal subunit protein bL20, found in Francisella tularensis subsp. novicida (strain U112).